The following is a 353-amino-acid chain: Phospho-N-acetylmuramoyl-pentapeptide-transferase (353 aa).

Transmembrane regions (helical) follow at residues 22–42 (FAFF…ITWA), 65–85 (TPTM…LFCI), 88–108 (DNIF…IGLI), 129–149 (LLAQ…SSEL), 161–181 (PLFD…ISSS), 192–212 (GLAT…LYLS), 228–248 (GLGE…GFLW), 256–276 (VFMG…LAII), 281–301 (ILLL…ILQV), and 330–350 (KIIV…LASI).

It belongs to the glycosyltransferase 4 family. MraY subfamily. Mg(2+) is required as a cofactor.

The protein resides in the cell inner membrane. The catalysed reaction is UDP-N-acetyl-alpha-D-muramoyl-L-alanyl-gamma-D-glutamyl-meso-2,6-diaminopimeloyl-D-alanyl-D-alanine + di-trans,octa-cis-undecaprenyl phosphate = di-trans,octa-cis-undecaprenyl diphospho-N-acetyl-alpha-D-muramoyl-L-alanyl-D-glutamyl-meso-2,6-diaminopimeloyl-D-alanyl-D-alanine + UMP. The protein operates within cell wall biogenesis; peptidoglycan biosynthesis. Functionally, catalyzes the initial step of the lipid cycle reactions in the biosynthesis of the cell wall peptidoglycan: transfers peptidoglycan precursor phospho-MurNAc-pentapeptide from UDP-MurNAc-pentapeptide onto the lipid carrier undecaprenyl phosphate, yielding undecaprenyl-pyrophosphoryl-MurNAc-pentapeptide, known as lipid I. This is Phospho-N-acetylmuramoyl-pentapeptide-transferase from Campylobacter jejuni subsp. jejuni serotype O:6 (strain 81116 / NCTC 11828).